A 263-amino-acid chain; its full sequence is uncharacterized protein (263 aa).

An ATP-binding site is contributed by 31–38; the sequence is GPTGSGKT.

This sequence belongs to the CbbQ/NirQ/NorQ/GpvN family.

This is an uncharacterized protein from Staphylococcus saprophyticus subsp. saprophyticus (strain ATCC 15305 / DSM 20229 / NCIMB 8711 / NCTC 7292 / S-41).